A 110-amino-acid polypeptide reads, in one-letter code: Protein SPIRAL1-like 2 (110 aa).

Residues 28–110 (AVNKTPAETE…LDYLFGGGSN (83 aa)) form a disordered region. Residues 40 to 52 (AHAPPTQAAAANA) show a composition bias toward low complexity. Positions 63-82 (LNSNSANNYMRAEGQNTGNF) are enriched in polar residues. The residue at position 67 (S67) is a Phosphoserine. Residues 95 to 110 (PGGGSSLDYLFGGGSN) are compositionally biased toward gly residues.

The protein belongs to the SPIRAL1 family. Ubiquitous.

Its function is as follows. Acts redundantly with SPR1 in maintaining the cortical microtubules organization essential for anisotropic cell growth. In Arabidopsis thaliana (Mouse-ear cress), this protein is Protein SPIRAL1-like 2 (SP1L2).